A 420-amino-acid chain; its full sequence is UDP-N-acetylglucosamine 1-carboxyvinyltransferase (420 aa).

22–23 (KN) is a binding site for phosphoenolpyruvate. Arg92 serves as a coordination point for UDP-N-acetyl-alpha-D-glucosamine. Cys116 functions as the Proton donor in the catalytic mechanism. Cys116 is modified (2-(S-cysteinyl)pyruvic acid O-phosphothioketal). UDP-N-acetyl-alpha-D-glucosamine is bound by residues 121-125 (RPIDL), Asp307, and Leu329.

Belongs to the EPSP synthase family. MurA subfamily.

Its subcellular location is the cytoplasm. The catalysed reaction is phosphoenolpyruvate + UDP-N-acetyl-alpha-D-glucosamine = UDP-N-acetyl-3-O-(1-carboxyvinyl)-alpha-D-glucosamine + phosphate. The protein operates within cell wall biogenesis; peptidoglycan biosynthesis. Functionally, cell wall formation. Adds enolpyruvyl to UDP-N-acetylglucosamine. This is UDP-N-acetylglucosamine 1-carboxyvinyltransferase from Nitratiruptor sp. (strain SB155-2).